The sequence spans 323 residues: E3 ubiquitin-protein ligase SIRP1 (323 aa).

The RING-type; atypical zinc-finger motif lies at 199-240; that stretch reads CSVCLDDLEVGSQAKQMPCEHKFHSSCILPWLELHSSCPVCR. 2 disordered regions span residues 248–280 and 296–323; these read TKDLNEPSNIGRVEDSHEEVRADGPGNVSESSN and REAQNAGGVSTDQQSPHTSGTNPNAGHS. The span at 259–269 shows a compositional bias: basic and acidic residues; sequence RVEDSHEEVRA.

It localises to the cytoplasm. The enzyme catalyses S-ubiquitinyl-[E2 ubiquitin-conjugating enzyme]-L-cysteine + [acceptor protein]-L-lysine = [E2 ubiquitin-conjugating enzyme]-L-cysteine + N(6)-ubiquitinyl-[acceptor protein]-L-lysine.. It participates in protein modification; protein ubiquitination. Its function is as follows. Possesses E3 ubiqutin-protein ligase activity in vitro. Acts as negative regulator of salinity stress tolerance mediated by the ubiquitin-proteasome degradation pathway. The polypeptide is E3 ubiquitin-protein ligase SIRP1 (Oryza sativa subsp. japonica (Rice)).